Here is a 281-residue protein sequence, read N- to C-terminus: Nucleotide-binding protein PSHAa2554 (281 aa).

An ATP-binding site is contributed by 8–15; the sequence is GRSGSGKS. A GTP-binding site is contributed by 56–59; the sequence is DVRN.

The protein belongs to the RapZ-like family.

Displays ATPase and GTPase activities. The chain is Nucleotide-binding protein PSHAa2554 from Pseudoalteromonas translucida (strain TAC 125).